The sequence spans 434 residues: Phosphomethylpyrimidine synthase 2 (434 aa).

Residues methionine 94, tyrosine 123, histidine 162, 184–186 (SRG), 225–228 (NAMR), and glutamate 264 contribute to the substrate site. Histidine 268 lines the Zn(2+) pocket. Tyrosine 291 contributes to the substrate binding site. Histidine 332 is a binding site for Zn(2+). [4Fe-4S] cluster is bound by residues cysteine 408, cysteine 411, and cysteine 415.

It belongs to the ThiC family. Requires [4Fe-4S] cluster as cofactor.

The enzyme catalyses 5-amino-1-(5-phospho-beta-D-ribosyl)imidazole + S-adenosyl-L-methionine = 4-amino-2-methyl-5-(phosphooxymethyl)pyrimidine + CO + 5'-deoxyadenosine + formate + L-methionine + 3 H(+). It participates in cofactor biosynthesis; thiamine diphosphate biosynthesis. Functionally, catalyzes the synthesis of the hydroxymethylpyrimidine phosphate (HMP-P) moiety of thiamine from aminoimidazole ribotide (AIR) in a radical S-adenosyl-L-methionine (SAM)-dependent reaction. The polypeptide is Phosphomethylpyrimidine synthase 2 (Methanosphaera stadtmanae (strain ATCC 43021 / DSM 3091 / JCM 11832 / MCB-3)).